Consider the following 79-residue polypeptide: Sec-independent protein translocase protein TatA (79 aa).

A helical transmembrane segment spans residues 1 to 21; that stretch reads MGSFSIWHWLIVLAIVVLVFG. The segment at 43–79 is disordered; sequence VKDGSTSTDTPAAAPGQVAGQTAADKTTIDVEAKQKG. Basic and acidic residues predominate over residues 69–79; that stretch reads TTIDVEAKQKG.

Belongs to the TatA/E family. In terms of assembly, the Tat system comprises two distinct complexes: a TatABC complex, containing multiple copies of TatA, TatB and TatC subunits, and a separate TatA complex, containing only TatA subunits. Substrates initially bind to the TatABC complex, which probably triggers association of the separate TatA complex to form the active translocon.

It is found in the cell inner membrane. In terms of biological role, part of the twin-arginine translocation (Tat) system that transports large folded proteins containing a characteristic twin-arginine motif in their signal peptide across membranes. TatA could form the protein-conducting channel of the Tat system. This chain is Sec-independent protein translocase protein TatA, found in Delftia acidovorans (strain DSM 14801 / SPH-1).